Consider the following 201-residue polypeptide: UPF0301 protein MMAR_0053 (201 aa).

The protein belongs to the UPF0301 (AlgH) family.

In Mycobacterium marinum (strain ATCC BAA-535 / M), this protein is UPF0301 protein MMAR_0053.